A 451-amino-acid chain; its full sequence is Serine--tRNA ligase (451 aa).

258–260 (TSE) is an L-serine binding site. An ATP-binding site is contributed by 289-291 (RSE). Glu-312 lines the L-serine pocket. 376–379 (EISS) provides a ligand contact to ATP. Ser-411 contributes to the L-serine binding site.

Belongs to the class-II aminoacyl-tRNA synthetase family. Type-1 seryl-tRNA synthetase subfamily. As to quaternary structure, homodimer. The tRNA molecule binds across the dimer.

It is found in the cytoplasm. The catalysed reaction is tRNA(Ser) + L-serine + ATP = L-seryl-tRNA(Ser) + AMP + diphosphate + H(+). It catalyses the reaction tRNA(Sec) + L-serine + ATP = L-seryl-tRNA(Sec) + AMP + diphosphate + H(+). It participates in aminoacyl-tRNA biosynthesis; selenocysteinyl-tRNA(Sec) biosynthesis; L-seryl-tRNA(Sec) from L-serine and tRNA(Sec): step 1/1. Its function is as follows. Catalyzes the attachment of serine to tRNA(Ser). Is also able to aminoacylate tRNA(Sec) with serine, to form the misacylated tRNA L-seryl-tRNA(Sec), which will be further converted into selenocysteinyl-tRNA(Sec). This is Serine--tRNA ligase from Bordetella pertussis (strain Tohama I / ATCC BAA-589 / NCTC 13251).